The sequence spans 127 residues: Sulfiredoxin (127 aa).

It belongs to the sulfiredoxin family. Mg(2+) is required as a cofactor. Forms a transient disulfide bond with TSA1 during the reduction of cysteine sulfinic acid (-SO2H).

Its subcellular location is the cytoplasm. The protein localises to the nucleus. It catalyses the reaction S-hydroxy-S-oxy-L-cysteinyl-[peroxiredoxin] + [protein]-dithiol + ATP = S-hydroxy-L-cysteinyl-[peroxiredoxin] + [protein]-disulfide + ADP + phosphate. Contributes to oxidative stress resistance by reducing cysteine-sulfinic acid formed under exposure to oxidants in the peroxiredoxin TSA1. May catalyze the reduction in a multi-step process by acting both as a specific phosphotransferase and as thioltransferase. This chain is Sulfiredoxin, found in Saccharomyces cerevisiae (strain ATCC 204508 / S288c) (Baker's yeast).